The primary structure comprises 127 residues: D-ribose pyranase (127 aa).

Histidine 20 (proton donor) is an active-site residue. Substrate is bound by residues aspartate 28, histidine 94, and 116–118 (YSN).

This sequence belongs to the RbsD / FucU family. RbsD subfamily. In terms of assembly, homodecamer.

It is found in the cytoplasm. It carries out the reaction beta-D-ribopyranose = beta-D-ribofuranose. It functions in the pathway carbohydrate metabolism; D-ribose degradation; D-ribose 5-phosphate from beta-D-ribopyranose: step 1/2. Catalyzes the interconversion of beta-pyran and beta-furan forms of D-ribose. This chain is D-ribose pyranase, found in Cutibacterium acnes (strain DSM 16379 / KPA171202) (Propionibacterium acnes).